Consider the following 553-residue polypeptide: CTP synthase (553 aa).

The tract at residues 1-266 (MTKNYIFITG…DNYICEYFKL (266 aa)) is amidoligase domain. Residue Ser14 participates in CTP binding. Ser14 is a binding site for UTP. Residues 15 to 20 (SLGKGI) and Asp72 each bind ATP. Mg(2+) is bound by residues Asp72 and Glu140. Residues 147-149 (DIE), 187-192 (KTKPTQ), and Lys223 contribute to the CTP site. Residues 187–192 (KTKPTQ) and Lys223 contribute to the UTP site. 239–241 (KDV) serves as a coordination point for ATP. Residues 291-544 (IIGIIGKYIK…IKSAKKNKKN (254 aa)) enclose the Glutamine amidotransferase type-1 domain. Residue Gly352 participates in L-glutamine binding. Cys379 acts as the Nucleophile; for glutamine hydrolysis in catalysis. L-glutamine is bound by residues 380-383 (LGMQ), Glu403, and Arg472. Residues His517 and Glu519 contribute to the active site.

It belongs to the CTP synthase family. In terms of assembly, homotetramer.

The enzyme catalyses UTP + L-glutamine + ATP + H2O = CTP + L-glutamate + ADP + phosphate + 2 H(+). It catalyses the reaction L-glutamine + H2O = L-glutamate + NH4(+). The catalysed reaction is UTP + NH4(+) + ATP = CTP + ADP + phosphate + 2 H(+). It participates in pyrimidine metabolism; CTP biosynthesis via de novo pathway; CTP from UDP: step 2/2. Allosterically activated by GTP, when glutamine is the substrate; GTP has no effect on the reaction when ammonia is the substrate. The allosteric effector GTP functions by stabilizing the protein conformation that binds the tetrahedral intermediate(s) formed during glutamine hydrolysis. Inhibited by the product CTP, via allosteric rather than competitive inhibition. Functionally, catalyzes the ATP-dependent amination of UTP to CTP with either L-glutamine or ammonia as the source of nitrogen. Regulates intracellular CTP levels through interactions with the four ribonucleotide triphosphates. The chain is CTP synthase from Buchnera aphidicola subsp. Schizaphis graminum (strain Sg).